A 102-amino-acid chain; its full sequence is Pyrimidine/purine nucleoside phosphorylase (102 aa).

It belongs to the nucleoside phosphorylase PpnP family.

It catalyses the reaction a purine D-ribonucleoside + phosphate = a purine nucleobase + alpha-D-ribose 1-phosphate. It carries out the reaction adenosine + phosphate = alpha-D-ribose 1-phosphate + adenine. The enzyme catalyses cytidine + phosphate = cytosine + alpha-D-ribose 1-phosphate. The catalysed reaction is guanosine + phosphate = alpha-D-ribose 1-phosphate + guanine. It catalyses the reaction inosine + phosphate = alpha-D-ribose 1-phosphate + hypoxanthine. It carries out the reaction thymidine + phosphate = 2-deoxy-alpha-D-ribose 1-phosphate + thymine. The enzyme catalyses uridine + phosphate = alpha-D-ribose 1-phosphate + uracil. The catalysed reaction is xanthosine + phosphate = alpha-D-ribose 1-phosphate + xanthine. In terms of biological role, catalyzes the phosphorolysis of diverse nucleosides, yielding D-ribose 1-phosphate and the respective free bases. Can use uridine, adenosine, guanosine, cytidine, thymidine, inosine and xanthosine as substrates. Also catalyzes the reverse reactions. This chain is Pyrimidine/purine nucleoside phosphorylase, found in Shewanella amazonensis (strain ATCC BAA-1098 / SB2B).